A 362-amino-acid polypeptide reads, in one-letter code: Biotin synthase (362 aa).

The 228-residue stretch at 46 to 273 (NEVQVSTLLS…ASHVRLSAGR (228 aa)) folds into the Radical SAM core domain. [4Fe-4S] cluster contacts are provided by Cys-61, Cys-65, and Cys-68. [2Fe-2S] cluster is bound by residues Cys-105, Cys-136, Cys-196, and Arg-268.

The protein belongs to the radical SAM superfamily. Biotin synthase family. As to quaternary structure, homodimer. The cofactor is [4Fe-4S] cluster. Requires [2Fe-2S] cluster as cofactor.

It catalyses the reaction (4R,5S)-dethiobiotin + (sulfur carrier)-SH + 2 reduced [2Fe-2S]-[ferredoxin] + 2 S-adenosyl-L-methionine = (sulfur carrier)-H + biotin + 2 5'-deoxyadenosine + 2 L-methionine + 2 oxidized [2Fe-2S]-[ferredoxin]. Its pathway is cofactor biosynthesis; biotin biosynthesis; biotin from 7,8-diaminononanoate: step 2/2. In terms of biological role, catalyzes the conversion of dethiobiotin (DTB) to biotin by the insertion of a sulfur atom into dethiobiotin via a radical-based mechanism. This chain is Biotin synthase, found in Aeromonas salmonicida (strain A449).